The primary structure comprises 157 residues: Large ribosomal subunit protein uL11 (157 aa).

Belongs to the universal ribosomal protein uL11 family. Part of the ribosomal stalk of the 50S ribosomal subunit. Interacts with L10 and the large rRNA to form the base of the stalk. L10 forms an elongated spine to which L12 dimers bind in a sequential fashion forming a multimeric L10(L12)X complex.

In terms of biological role, forms part of the ribosomal stalk which helps the ribosome interact with GTP-bound translation factors. This Methanocorpusculum labreanum (strain ATCC 43576 / DSM 4855 / Z) protein is Large ribosomal subunit protein uL11.